A 137-amino-acid polypeptide reads, in one-letter code: 2-iminobutanoate/2-iminopropanoate deaminase (137 aa).

Ser2 is subject to N-acetylserine. An N6-succinyllysine mark is found at Lys13, Lys60, and Lys67. Position 74 is a phosphothreonine (Thr74).

Belongs to the RutC family. As to quaternary structure, homotrimer. Interacts with YTHDF2. Liver and kidney.

It is found in the cytoplasm. Its subcellular location is the nucleus. The protein localises to the peroxisome. The protein resides in the mitochondrion. It carries out the reaction 2-iminobutanoate + H2O = 2-oxobutanoate + NH4(+). It catalyses the reaction 2-iminopropanoate + H2O = pyruvate + NH4(+). In terms of biological role, catalyzes the hydrolytic deamination of enamine/imine intermediates that form during the course of normal metabolism. May facilitate the release of ammonia from these potentially toxic reactive metabolites, reducing their impact on cellular components. It may act on enamine/imine intermediates formed by several types of pyridoxal-5'-phosphate-dependent dehydratases including L-threonine dehydratase. Its function is as follows. Also promotes endoribonucleolytic cleavage of some transcripts by promoting recruitment of the ribonuclease P/MRP complex. Acts by bridging YTHDF2 and the ribonuclease P/MRP complex. RIDA/HRSP12 binds to N6-methyladenosine (m6A)-containing mRNAs containing a 5'-GGUUC-3' motif: cooperative binding of RIDA/HRSP12 and YTHDF2 to such transcripts lead to recruitment of the ribonuclease P/MRP complex and subsequent endoribonucleolytic cleavage. In Rattus norvegicus (Rat), this protein is 2-iminobutanoate/2-iminopropanoate deaminase.